Consider the following 536-residue polypeptide: E3 ubiquitin-protein ligase Godzilla (536 aa).

A signal peptide spans 1–21; the sequence is MSKRSCQILTLLGLCLVCHEA. At 22 to 174 the chain is on the extracellular side; that stretch reads TLVGGHVLVY…DELPFNINTQ (153 aa). In terms of domain architecture, PA spans 89–151; it reads FVALVARGEC…FVGHTTGKAL (63 aa). N-linked (GlcNAc...) asparagine glycans are attached at residues Asn109 and Asn132. A helical transmembrane segment spans residues 175-195; sequence LILPFSILIGMCFIIMVIYMI. Topologically, residues 196–536 are cytoplasmic; sequence YKCIREQRRL…HSASDRQFLI (341 aa). The segment at 235–277 adopts an RING-type; atypical zinc-finger fold; it reads CVICLEDFIEDDKLRVLPCSHPYHTHCIDPWLTENRRVCPICK. Disordered regions lie at residues 287–334 and 350–372; these read RASR…GAAG and HGTFRRGHAGRNPFEESQSSDDE. The span at 307 to 334 shows a compositional bias: low complexity; the sequence is TPLLQQQQSNGRQVGQVSSASSAGGAAG.

Belongs to the Godzilla family.

It is found in the endosome membrane. It catalyses the reaction S-ubiquitinyl-[E2 ubiquitin-conjugating enzyme]-L-cysteine + [acceptor protein]-L-lysine = [E2 ubiquitin-conjugating enzyme]-L-cysteine + N(6)-ubiquitinyl-[acceptor protein]-L-lysine.. Its pathway is protein modification; protein ubiquitination. Its function is as follows. Endosomal E3 ubiquitin-protein ligase that regulates the recycling endosome pathway by mediating ubiquitination of Synaptobrevin (Syb). Also acts as a regulator of transcytosis in wing imaginal disks by catalyzing ubiquitination of Syb: ubiquitination of Syb promotes transcytosis of wingless (wg) to the basolateral surface. This Drosophila melanogaster (Fruit fly) protein is E3 ubiquitin-protein ligase Godzilla.